The primary structure comprises 131 residues: Chromatin accessibility complex protein 1 (131 aa).

The residue at position 2 (A2) is an N-acetylalanine. Positions 100–124 (ASKYLKMLKEEKREEDEENDNDNES) form a coiled coil. Residue K102 is modified to N6-acetyllysine. The tract at residues 109 to 131 (EEKREEDEENDNDNESDHDEADS) is disordered. Over residues 112–131 (REEDEENDNDNESDHDEADS) the composition is skewed to acidic residues. S124 carries the post-translational modification Phosphoserine.

As to quaternary structure, heterodimer with POLE3; binds to DNA. Component of the CHRAC ISWI chromatin remodeling complex at least composed of SMARCA5/SNF2H, BAZ1A/ACF1, CHRAC1 and POLE3; the complex preferentially binds DNA through the CHRAC1-POLE3 heterodimer and possesses ATP-dependent nucleosome-remodeling activity. Within the complex, the heterodimer with POLE3 interacts with SMARCA5/SNF2H; the interaction is direct and enhances nucleosome sliding activity by the SMARCA5/SNF2H and BAZ1A/ACF1 interaction. Within the complex, the heterodimer with POLE3 interacts with BAZ1A/ACF1; the interactions are direct. In terms of tissue distribution, expressed in heart, brain, placenta, lung, liver, skeletal muscle, kidney and pancreas.

The protein localises to the nucleus. Functionally, forms a complex with DNA polymerase epsilon subunit POLE3 and binds naked DNA, which is then incorporated into chromatin, aided by the nucleosome remodeling activity of ISWI/SNF2H and ACF1. Does not enhance nucleosome sliding activity of the ACF-5 ISWI chromatin remodeling complex. The polypeptide is Chromatin accessibility complex protein 1 (CHRAC1) (Homo sapiens (Human)).